Consider the following 125-residue polypeptide: MSDLLKEFNEQQMKLLSNKEIPKFSSGDTLRVSMKIFDGVSERLQVFEGVCIKRKNNGLHSSFTLRKISYNESIQLQVFLYSPIVESIEVIKFGRVRRAKLYYMLSLFGKSARIKERSDRTKKLS.

It belongs to the bacterial ribosomal protein bL19 family.

Functionally, this protein is located at the 30S-50S ribosomal subunit interface and may play a role in the structure and function of the aminoacyl-tRNA binding site. The polypeptide is Large ribosomal subunit protein bL19 (Ehrlichia chaffeensis (strain ATCC CRL-10679 / Arkansas)).